The following is an 897-amino-acid chain: Leucine--tRNA ligase (897 aa).

Residues 42-52 (PYPSGKLHMGH) carry the 'HIGH' region motif. A 'KMSKS' region motif is present at residues 645–649 (TMSKS). K648 is a binding site for ATP.

It belongs to the class-I aminoacyl-tRNA synthetase family.

The protein resides in the cytoplasm. The catalysed reaction is tRNA(Leu) + L-leucine + ATP = L-leucyl-tRNA(Leu) + AMP + diphosphate. This Paracidovorax citrulli (strain AAC00-1) (Acidovorax citrulli) protein is Leucine--tRNA ligase.